The sequence spans 483 residues: Deoxyribodipyrimidine photo-lyase (483 aa).

Residues 2 to 136 (QKNLIWFRND…LVKGFHDNLL (135 aa)) enclose the Photolyase/cryptochrome alpha/beta domain. 2 residues coordinate (6R)-5,10-methylene-5,6,7,8-tetrahydrofolate: Asn-109 and Glu-110. FAD is bound at residue Tyr-225. Arg-229 contacts DNA. Residue 237-241 (TSMLS) coordinates FAD. Interaction with DNA regions lie at residues 278–285 (QILWREFY) and 345–346 (NR). Position 376 to 378 (376 to 378 (DGD)) interacts with FAD. Gln-408 lines the DNA pocket.

This sequence belongs to the DNA photolyase class-1 family. As to quaternary structure, monomer. It depends on FAD as a cofactor. (6R)-5,10-methylene-5,6,7,8-tetrahydrofolate is required as a cofactor.

It carries out the reaction cyclobutadipyrimidine (in DNA) = 2 pyrimidine residues (in DNA).. Functionally, involved in repair of UV radiation-induced DNA damage. Catalyzes the light-dependent monomerization (300-600 nm) of cyclobutyl pyrimidine dimers (in cis-syn configuration), which are formed between adjacent bases on the same DNA strand upon exposure to ultraviolet radiation. The polypeptide is Deoxyribodipyrimidine photo-lyase (phrB) (Buchnera aphidicola subsp. Acyrthosiphon pisum (strain APS) (Acyrthosiphon pisum symbiotic bacterium)).